The following is a 342-amino-acid chain: Cyclin pch1 (342 aa).

The interval 261-342 (LPIDQKNGSH…TDKEMETEAS (82 aa)) is disordered. Polar residues predominate over residues 278–314 (TPSSLASVSTQATPQHQNSSGRTDSFHSLNTETPSKS). Thr300 carries the post-translational modification Phosphothreonine. Ser302 carries the post-translational modification Phosphoserine. Residues 329–342 (KSSDTDKEMETEAS) show a composition bias toward basic and acidic residues.

This sequence belongs to the cyclin family. Cyclin C subfamily. As to quaternary structure, interacts with cdc2 protein kinase and with the N-terminal domain of cdk9.

It localises to the nucleus. Essential for progression through the whole cell cycle. The polypeptide is Cyclin pch1 (pch1) (Schizosaccharomyces pombe (strain 972 / ATCC 24843) (Fission yeast)).